Here is a 554-residue protein sequence, read N- to C-terminus: Inactive sesquithujene synthase B (554 aa).

Residues Asp308 and Asp312 each coordinate Mg(2+). Substrate is bound by residues Asp308, Asp312, Arg449, and Asn452. A DDXXD motif motif is present at residues 308–312 (DDMFD). Positions 452, 456, and 460 each coordinate Mg(2+).

It belongs to the terpene synthase family. As to quaternary structure, monomer. Mg(2+) is required as a cofactor. The cofactor is Mn(2+).

The protein resides in the cytoplasm. Its pathway is secondary metabolite biosynthesis; terpenoid biosynthesis. Functionally, non-functional sesquiterpene synthase having less than 1% of the activity found in TPS5A. The polypeptide is Inactive sesquithujene synthase B (Zea mays (Maize)).